An 873-amino-acid polypeptide reads, in one-letter code: Sine oculis-binding protein homolog (873 aa).

A compositionally biased stretch (basic and acidic residues) spans 1 to 14 (MAEMEKEGRPPENK). Residues 1–26 (MAEMEKEGRPPENKRSRKPAHPVKRE) are disordered. 2 consecutive FCS-type zinc fingers follow at residues 142–180 (DDVS…KCFA) and 216–256 (FKNN…KCLN). 5 disordered regions span residues 307-338 (ARRK…SDTA), 413-485 (RGPP…GAPL), 550-608 (KPPS…NQAQ), 742-766 (STEG…ELAV), and 779-811 (SNCH…NPAD). Low complexity predominate over residues 312–338 (PSPASAAGQIQGPGPSASTTASPSDTA). Residues 460 to 485 (IHPPTTPTMPGNPPGLLPPPPPGAPL) show a composition bias toward pro residues. Residues 554–570 (GFSSNGENFIPSNSSET) are compositionally biased toward polar residues. Over residues 571–603 (PGGKPPNSSSSPRESKQGSSKPSDSSPSCSGQS) the composition is skewed to low complexity. Residues 783–793 (LEGDTGKKAGE) are compositionally biased toward basic and acidic residues.

Belongs to the SOBP family.

Functionally, implicated in development of the cochlea. The chain is Sine oculis-binding protein homolog from Gallus gallus (Chicken).